Consider the following 460-residue polypeptide: L-seryl-tRNA(Sec) selenium transferase (460 aa).

K293 bears the N6-(pyridoxal phosphate)lysine mark.

The protein belongs to the SelA family. It depends on pyridoxal 5'-phosphate as a cofactor.

It localises to the cytoplasm. It carries out the reaction L-seryl-tRNA(Sec) + selenophosphate + H(+) = L-selenocysteinyl-tRNA(Sec) + phosphate. Its pathway is aminoacyl-tRNA biosynthesis; selenocysteinyl-tRNA(Sec) biosynthesis; selenocysteinyl-tRNA(Sec) from L-seryl-tRNA(Sec) (bacterial route): step 1/1. In terms of biological role, converts seryl-tRNA(Sec) to selenocysteinyl-tRNA(Sec) required for selenoprotein biosynthesis. This chain is L-seryl-tRNA(Sec) selenium transferase, found in Pasteurella multocida (strain Pm70).